The primary structure comprises 270 residues: tRNA pseudouridine synthase A (270 aa).

Asp-60 functions as the Nucleophile in the catalytic mechanism. An RNA binding region spans residues 107-111 (FHARF). Tyr-118 serves as a coordination point for substrate. Positions 168–172 (QCQSR) are interaction with tRNA.

The protein belongs to the tRNA pseudouridine synthase TruA family. In terms of assembly, homodimer.

The catalysed reaction is uridine(38/39/40) in tRNA = pseudouridine(38/39/40) in tRNA. Its function is as follows. Formation of pseudouridine at positions 38, 39 and 40 in the anticodon stem and loop of transfer RNAs. This chain is tRNA pseudouridine synthase A, found in Shigella sonnei (strain Ss046).